Consider the following 223-residue polypeptide: Ribosomal RNA small subunit methyltransferase Nep1 (223 aa).

S-adenosyl-L-methionine contacts are provided by residues Gly-181, Gly-186, and 199–204; that span reads LYREPL.

This sequence belongs to the class IV-like SAM-binding methyltransferase superfamily. RNA methyltransferase NEP1 family. As to quaternary structure, homodimer.

It carries out the reaction a pseudouridine in rRNA + S-adenosyl-L-methionine = an N(1)-methylpseudouridine in rRNA + S-adenosyl-L-homocysteine + H(+). Methyltransferase involved in ribosomal biogenesis. Specifically catalyzes the N1-methylation of the pseudouridine corresponding to position 914 in M.jannaschii 16S rRNA. This Pyrococcus furiosus (strain ATCC 43587 / DSM 3638 / JCM 8422 / Vc1) protein is Ribosomal RNA small subunit methyltransferase Nep1.